A 111-amino-acid chain; its full sequence is WAP four-disulfide core domain protein 12 (111 aa).

The N-terminal stretch at 1 to 23 is a signal peptide; sequence MGSSSFLVLMVSLTLVTLVAVEG. In terms of domain architecture, WAP spans 27–74; it reads DIEKAGVCPADNVRCFKSDPPQCHTDQDCLGERKCCYLHCGFKCVIPV. 4 cysteine pairs are disulfide-bonded: Cys34–Cys62, Cys41–Cys66, Cys49–Cys61, and Cys55–Cys70. A disordered region spans residues 80-111; that stretch reads GGNKDEDVSRPYPEPGWEAKCPGSSSTRCPQK. Residues 102–111 show a composition bias toward polar residues; the sequence is GSSSTRCPQK.

Its subcellular location is the secreted. Its function is as follows. Antibacterial protein. Putative acid-stable proteinase inhibitor. The protein is WAP four-disulfide core domain protein 12 (WFDC12) of Pan troglodytes (Chimpanzee).